Here is an 864-residue protein sequence, read N- to C-terminus: Putative Gly-rich membrane protein Bcell_0380 (864 aa).

A helical membrane pass occupies residues 7–27 (ITFLAAFICIIFVIYAIYHSV). Positions 372–399 (TVENSFYDEDTTGQSDTGKGTPMSTADM) are disordered. Residues 383-395 (TGQSDTGKGTPMS) are compositionally biased toward polar residues.

The protein localises to the cell membrane. The protein is Putative Gly-rich membrane protein Bcell_0380 of Evansella cellulosilytica (strain ATCC 21833 / DSM 2522 / FERM P-1141 / JCM 9156 / N-4) (Bacillus cellulosilyticus).